The sequence spans 218 residues: Large ribosomal subunit protein mL54 (218 aa).

Belongs to the mitochondrion-specific ribosomal protein mL54 family. As to quaternary structure, component of the mitochondrial large ribosomal subunit (mt-LSU). Mature N.crassa 74S mitochondrial ribosomes consist of a small (37S) and a large (54S) subunit. The 37S small subunit contains a 16S ribosomal RNA (16S mt-rRNA) and 32 different proteins. The 54S large subunit contains a 23S rRNA (23S mt-rRNA) and 42 different proteins.

It is found in the mitochondrion. In terms of biological role, component of the mitochondrial ribosome (mitoribosome), a dedicated translation machinery responsible for the synthesis of mitochondrial genome-encoded proteins, including at least some of the essential transmembrane subunits of the mitochondrial respiratory chain. The mitoribosomes are attached to the mitochondrial inner membrane and translation products are cotranslationally integrated into the membrane. This is Large ribosomal subunit protein mL54 (mrpl37) from Neurospora crassa (strain ATCC 24698 / 74-OR23-1A / CBS 708.71 / DSM 1257 / FGSC 987).